The chain runs to 363 residues: Inositol-3-phosphate synthase (363 aa).

Lys-65 is covalently cross-linked (Isoglutamyl lysine isopeptide (Lys-Gln) (interchain with Q-Cter in protein Pup)). Residues Asp-70, Ala-129, Tyr-149, Ser-192, Asp-227, and Lys-240 each contribute to the NAD(+) site.

Belongs to the myo-inositol 1-phosphate synthase family. Requires NAD(+) as cofactor. Pupylated at Lys-65 by the prokaryotic ubiquitin-like protein Pup, which leads to its degradation by the proteasome.

The enzyme catalyses D-glucose 6-phosphate = 1D-myo-inositol 3-phosphate. Functionally, key enzyme in myo-inositol biosynthesis pathway that catalyzes the conversion of glucose 6-phosphate to 1D-myo-inositol 3-phosphate in a NAD-dependent manner. The polypeptide is Inositol-3-phosphate synthase (ino1) (Mycolicibacterium smegmatis (strain ATCC 700084 / mc(2)155) (Mycobacterium smegmatis)).